The following is a 391-amino-acid chain: Enoyl-CoA delta isomerase 2 (391 aa).

The transit peptide at 1–36 directs the protein to the mitochondrion; it reads MAAVTWSRARCWCPSLLQVLRLPVTKLHLGRPAMRA. Residues 37-122 form the ACB domain; sequence TQQDFENAMN…VSSLSSSSEA (86 aa). Lys49 is modified (N6-acetyllysine; alternate). An N6-succinyllysine; alternate modification is found at Lys49. Lys53 carries the post-translational modification N6-succinyllysine. Position 60 is an N6-acetyllysine; alternate (Lys60). Lys60 carries the post-translational modification N6-succinyllysine; alternate. Residue 64-68 participates in an acyl-CoA binding; that stretch reads YALYK. Residues Lys68, Lys79, and Lys88 each carry the N6-succinyllysine modification. Lys90 is modified (N6-acetyllysine; alternate). Position 90 is an N6-succinyllysine; alternate (Lys90). Residue Lys90 coordinates an acyl-CoA. Position 99 is a phosphoserine (Ser99). Tyr109 is a binding site for an acyl-CoA. Phosphoserine is present on Ser117. 2 positions are modified to N6-succinyllysine: Lys127 and Lys159. Positions 149-319 are ECH-like; it reads TKITFNRPSK…AQGLVTEVFP (171 aa). 196–200 contributes to the substrate binding site; sequence SGNDL. Lys286 is subject to N6-succinyllysine. The Microbody targeting signal motif lies at 389–391; it reads PKL.

The protein in the C-terminal section; belongs to the enoyl-CoA hydratase/isomerase family. Liver (at protein level).

The protein resides in the peroxisome matrix. It localises to the mitochondrion. It carries out the reaction a (3Z)-enoyl-CoA = a 4-saturated (2E)-enoyl-CoA. It catalyses the reaction a (3E)-enoyl-CoA = a 4-saturated (2E)-enoyl-CoA. The enzyme catalyses (2E)-tetradecenoyl-CoA = (3Z)-tetradecenoyl-CoA. The catalysed reaction is (3E)-tetradecenoyl-CoA = (2E)-tetradecenoyl-CoA. It carries out the reaction (3E)-octenoyl-CoA = (2E)-octenoyl-CoA. It catalyses the reaction (3Z)-octenoyl-CoA = (2E)-octenoyl-CoA. The enzyme catalyses (3E)-nonenoyl-CoA = (2E)-nonenoyl-CoA. Its pathway is lipid metabolism; fatty acid beta-oxidation. Functionally, able to isomerize both 3-cis and 3-trans double bonds into the 2-trans form in a range of enoyl-CoA species. Has a preference for 3-trans substrates. This chain is Enoyl-CoA delta isomerase 2, found in Rattus norvegicus (Rat).